The following is a 149-amino-acid chain: Myosin, essential light chain (149 aa).

EF-hand domains follow at residues Ser-7–Asn-42 and Gly-79–Lys-114.

As to quaternary structure, myosin is a hexamer of 2 heavy chains and 4 light chains (two regulatory light chains and two essential light chains).

The chain is Myosin, essential light chain from Branchiostoma floridae (Florida lancelet).